Here is a 360-residue protein sequence, read N- to C-terminus: Photosystem II protein D1 (360 aa).

The next 3 helical transmembrane spans lie at 29–46 (YIGWFGVLMIPTLLAATA), 118–133 (HFLLGCACYLGRQWEL), and 142–156 (WICVAYSAPLASATA). Histidine 118 is a chlorophyll a binding site. Position 126 (tyrosine 126) interacts with pheophytin a. 2 residues coordinate [CaMn4O5] cluster: aspartate 170 and glutamate 189. A helical transmembrane segment spans residues 197–218 (FHMLGVAGVFGGSLFSAMHGSL). Histidine 198 contacts chlorophyll a. Residues histidine 215 and 264-265 (SF) each bind a quinone. Histidine 215 is a binding site for Fe cation. Histidine 272 is a Fe cation binding site. The helical transmembrane segment at 274–288 (FLAAWPVVGIWFTAL) threads the bilayer. [CaMn4O5] cluster contacts are provided by histidine 332, glutamate 333, aspartate 342, and alanine 344. Positions 345-360 (AGEVAPVALTAPAING) are excised as a propeptide.

Belongs to the reaction center PufL/M/PsbA/D family. PSII is composed of 1 copy each of membrane proteins PsbA, PsbB, PsbC, PsbD, PsbE, PsbF, PsbH, PsbI, PsbJ, PsbK, PsbL, PsbM, PsbT, PsbX, PsbY, PsbZ, Psb30/Ycf12, peripheral proteins PsbO, CyanoQ (PsbQ), PsbU, PsbV and a large number of cofactors. It forms dimeric complexes. It depends on The D1/D2 heterodimer binds P680, chlorophylls that are the primary electron donor of PSII, and subsequent electron acceptors. It shares a non-heme iron and each subunit binds pheophytin, quinone, additional chlorophylls, carotenoids and lipids. D1 provides most of the ligands for the Mn4-Ca-O5 cluster of the oxygen-evolving complex (OEC). There is also a Cl(-1) ion associated with D1 and D2, which is required for oxygen evolution. The PSII complex binds additional chlorophylls, carotenoids and specific lipids. as a cofactor. Post-translationally, tyr-161 forms a radical intermediate that is referred to as redox-active TyrZ, YZ or Y-Z. In terms of processing, C-terminally processed by CtpA; processing is essential to allow assembly of the oxygen-evolving complex and thus photosynthetic growth.

The protein localises to the cellular thylakoid membrane. It catalyses the reaction 2 a plastoquinone + 4 hnu + 2 H2O = 2 a plastoquinol + O2. Its function is as follows. Photosystem II (PSII) is a light-driven water:plastoquinone oxidoreductase that uses light energy to abstract electrons from H(2)O, generating O(2) and a proton gradient subsequently used for ATP formation. It consists of a core antenna complex that captures photons, and an electron transfer chain that converts photonic excitation into a charge separation. The D1/D2 (PsbA/PsbD) reaction center heterodimer binds P680, the primary electron donor of PSII as well as several subsequent electron acceptors. In Microchaete diplosiphon (Fremyella diplosiphon), this protein is Photosystem II protein D1.